Consider the following 1548-residue polypeptide: MLRAVALCVSVVLIALYTPTSGESSQSYPITTLINAKWTQTPLYLEIAEYLADEQAGLFWDYVSGVTKLDTVLNEYDTESQQYNAALELVKSHVSSPQLPLLRLVVSMHSLTPRIQTHFQLAEELRSSGSCQSFTFAQVGSELACSFNELQKKLEVPLAKDSLDASVVTYSFDHIFPGSENNTRTVVLYGDLGSSQFRTYHKLLEKEANAGRIRYILRHQLAKKDKRPVRLSGYGVELHLKSTEYKSQDDAPKPEAGSTSDEDLANESDVQGFDFKVLKQKHPTLKRALDQLRQRLLQGNDEIAQLKAWEFQDLGLQAAAAIAEIQGDETLQILQYTAHNFPMLARTLLAHKVTDGLRAEVKHNTEAFGRSLNVAPPDGALFINGLFFDADTMDLYSLIETLRSEMRVLESLHSNNVRGSLASSLLALDLTASSKKEFAIDIRDTAVQWVNDIENDVQYRRWPSSVMDLLRPTFPGMLRNIRKNVFNLVLVVDALQPTARSVIKLSESFVIHQAPIRLGLVFDARDANEDNLADYVAITCAYNYVSQKKDARAALSFLTDIYAAVGETKVVTKKDIVKQLTKEFTSLSFAKAEEFLEEDSTYDYGRELAAEFIQRLGFGDKGQPQALLNGVPMPSNVVTADSDFEEAIFTEIMTHTSNLQKAVYKGELTDNDVAIDYLMNQPHVMPRLNQRILSQEDVKYLDINGVAYKNLGNVGVLNRLSNRDMTATLMDNLKYFGGKKSTELIGRASLQFLTIWVFADLETDQGRDLLTHALDYVQSGESVRVAFIPNTESSSASSRRNLNRLVWAAMQSLPPTQATEQVLKWLKKPKEKIEIPTQLEDILGSTELHLKMLRVYSQRVLGLNKSQRLVIGNGRLYGPLSSDESFDSADFALLARFSSLQYSDKVRQVLKESAQDVNEEFNSDTLLKLYASLLPRQTKTRFKLPTDLKTDHSVVKLPPKQENLPHFDVAAVLDPASRAAQKLTPILILLRQVLNCQLNLYLIPVPQHSDMPVKNFYRYVVEPEVQFEANGGRSDGPLAKFSGLPANPLLTQQLQVPENWLVEAVRAVYDLDNIKLTDIGGPVHSEFDLEYLLLEGHCFDAASGAPPRGLQLVLGTQSQPTLVDTIVMANLGYFQLKANPGAWSLRLREGKSADIYAISHIEGTNTHHSAGSSEVQVLITSLRSHVVKLRVSKKPGMQQAELLSDDNEQAAQSGMWNSIASSFGGGSANQAATDEDTETINIFSVASGHLYERLLRIMMVSLLKHTKSPVKFWFLKNYLSPQFTDFLPHMASEYNFQYELVQYKWPRWLHQQTEKQRTIWGYKILFLDVLFPLNVRKIIFVDADAIVRTDIKELYDMDLGGAPYAYTPFCDSRKEMEGFRFWKQGYWRSHLMGRRYHISALYVVDLKRFRKIAAGDRLRGQYQALSQDPNSLSNLDQDLPNNMIHQVAIKSLPDDWLWCQTWCSDSNFKTAKVIDLCNNPQTKEAKLTAAQRIVPEWKDYDAELKTLMSRIEDHENSHSRDSAVDDSVDDSVEVTTVTPSHEPKHGEL.

The N-terminal stretch at 1–22 is a signal peptide; that stretch reads MLRAVALCVSVVLIALYTPTSG. The N-linked (GlcNAc...) asparagine glycan is linked to Asn181. Residues 243 to 253 are compositionally biased toward basic and acidic residues; that stretch reads TEYKSQDDAPK. The disordered stretch occupies residues 243-265; sequence TEYKSQDDAPKPEAGSTSDEDLA. Residues Asn266 and Asn864 are each glycosylated (N-linked (GlcNAc...) asparagine). The interval 1227–1548 is glucosyltransferase; it reads SANQAATDED…PSHEPKHGEL (322 aa). The segment covering 1512–1523 has biased composition (basic and acidic residues); it reads EDHENSHSRDSA. A disordered region spans residues 1512-1548; it reads EDHENSHSRDSAVDDSVDDSVEVTTVTPSHEPKHGEL. The short motif at 1545 to 1548 is the Prevents secretion from ER element; the sequence is HGEL.

Belongs to the glycosyltransferase 8 family. As to quaternary structure, monomer. May interact with CG7484/Sep15. It depends on Ca(2+) as a cofactor. Mn(2+) serves as cofactor.

Its subcellular location is the endoplasmic reticulum lumen. The protein resides in the endoplasmic reticulum-Golgi intermediate compartment. The enzyme catalyses N(4)-(alpha-D-Man-(1-&gt;2)-alpha-D-Man-(1-&gt;2)-alpha-D-Man-(1-&gt;3)-[alpha-D-Man-(1-&gt;2)-alpha-D-Man-(1-&gt;3)-[alpha-D-Man-(1-&gt;2)-alpha-D-Man-(1-&gt;6)]-alpha-D-Man-(1-&gt;6)]-beta-D-Man-(1-&gt;4)-beta-D-GlcNAc-(1-&gt;4)-beta-D-GlcNAc)-L-asparaginyl-[protein] (N-glucan mannose isomer 9A1,2,3B1,2,3) + UDP-alpha-D-glucose = N(4)-(alpha-D-Glc-(1-&gt;3)-alpha-D-Man-(1-&gt;2)-alpha-D-Man-(1-&gt;2)-alpha-D-Man-(1-&gt;3)-[alpha-D-Man-(1-&gt;2)-alpha-D-Man-(1-&gt;3)-[alpha-D-Man-(1-&gt;2)-alpha-D-Man-(1-&gt;6)]-alpha-D-Man-(1-&gt;6)]-beta-D-Man-(1-&gt;4)-beta-D-GlcNAc-(1-&gt;4)-beta-D-GlcNAc)-L-asparaginyl-[protein] + UDP + H(+). It participates in protein modification; protein glycosylation. In terms of biological role, recognizes glycoproteins with minor folding defects. Reglucosylates single N-glycans near the misfolded part of the protein, thus providing quality control for protein folding in the endoplasmic reticulum. Reglucosylated proteins are recognized by calreticulin for recycling to the endoplasmic reticulum and refolding or degradation. The protein is UDP-glucose:glycoprotein glucosyltransferase of Drosophila melanogaster (Fruit fly).